The primary structure comprises 266 residues: Gasdermin bGSDM (266 aa).

4 consecutive transmembrane segments (beta stranded) span residues 65–81 (FSGQQLLQTDWSAGADL), 93–113 (EDKLKASLSGMKGLVLSFAYE), 162–181 (QFTVTIDCQREDQGKLEAAV), and 187–203 (AHASIERKQSNSFSLQT). The interval 248 to 266 (GEEDFSVQPLQAPSGLLKL) is C-terminal region.

The protein belongs to the bacterial gasdermin family. As to quaternary structure, monomer. Forms large, homooligomeric ring-shaped pores when inserted in membranes.

It is found in the cytoplasm. The protein resides in the cell membrane. Its activity is regulated as follows. The full-length protein before cleavage is inactive: intramolecular interactions between the N-terminal domain and the C-terminal region mediate autoinhibition. The pyroptosis-like-inducing activity is carried by the released N-terminal domain (Gasdermin bGSDM, N-terminus). In terms of biological role, precursor of a pore-forming protein involved in defense against bacteriophages. Cleavage of this precursor by its dedicated protease releases the active moiety (gasdermin bGSDM, N-terminus) which inserts into membranes, forming pores and triggering cell death. Expression of bGSDM and the neighboring protease gene (Ga0307981_100051430) is highly toxic in E.coli. Pore-forming protein that causes membrane permeabilization via a pyroptosis-like activity. This is the active form which makes ring-like pores with an interior pore diameter of 130-190 Angstroms, when integrated in liposomes. This chain is Gasdermin bGSDM, found in Unknown prokaryotic organism.